A 179-amino-acid chain; its full sequence is Large ribosomal subunit protein uL5 (179 aa).

The protein belongs to the universal ribosomal protein uL5 family. In terms of assembly, part of the 50S ribosomal subunit; part of the 5S rRNA/L5/L18/L25 subcomplex. Contacts the 5S rRNA and the P site tRNA. Forms a bridge to the 30S subunit in the 70S ribosome.

Its function is as follows. This is one of the proteins that bind and probably mediate the attachment of the 5S RNA into the large ribosomal subunit, where it forms part of the central protuberance. In the 70S ribosome it contacts protein S13 of the 30S subunit (bridge B1b), connecting the 2 subunits; this bridge is implicated in subunit movement. Contacts the P site tRNA; the 5S rRNA and some of its associated proteins might help stabilize positioning of ribosome-bound tRNAs. The sequence is that of Large ribosomal subunit protein uL5 from Vibrio cholerae serotype O1 (strain ATCC 39541 / Classical Ogawa 395 / O395).